Consider the following 183-residue polypeptide: ATP synthase subunit delta (183 aa).

Belongs to the ATPase delta chain family. F-type ATPases have 2 components, F(1) - the catalytic core - and F(0) - the membrane proton channel. F(1) has five subunits: alpha(3), beta(3), gamma(1), delta(1), epsilon(1). F(0) has three main subunits: a(1), b(2) and c(10-14). The alpha and beta chains form an alternating ring which encloses part of the gamma chain. F(1) is attached to F(0) by a central stalk formed by the gamma and epsilon chains, while a peripheral stalk is formed by the delta and b chains.

The protein resides in the cell inner membrane. In terms of biological role, f(1)F(0) ATP synthase produces ATP from ADP in the presence of a proton or sodium gradient. F-type ATPases consist of two structural domains, F(1) containing the extramembraneous catalytic core and F(0) containing the membrane proton channel, linked together by a central stalk and a peripheral stalk. During catalysis, ATP synthesis in the catalytic domain of F(1) is coupled via a rotary mechanism of the central stalk subunits to proton translocation. Functionally, this protein is part of the stalk that links CF(0) to CF(1). It either transmits conformational changes from CF(0) to CF(1) or is implicated in proton conduction. This chain is ATP synthase subunit delta, found in Maridesulfovibrio salexigens (strain ATCC 14822 / DSM 2638 / NCIMB 8403 / VKM B-1763) (Desulfovibrio salexigens).